The sequence spans 205 residues: LexA repressor (205 aa).

Positions 28 to 48 (RAEIARRLGFKSANAAEEHLK) form a DNA-binding region, H-T-H motif. Residues S122 and K159 each act as for autocatalytic cleavage activity in the active site.

It belongs to the peptidase S24 family. In terms of assembly, homodimer.

It carries out the reaction Hydrolysis of Ala-|-Gly bond in repressor LexA.. Its function is as follows. Represses a number of genes involved in the response to DNA damage (SOS response), including recA and lexA. In the presence of single-stranded DNA, RecA interacts with LexA causing an autocatalytic cleavage which disrupts the DNA-binding part of LexA, leading to derepression of the SOS regulon and eventually DNA repair. This chain is LexA repressor, found in Shewanella loihica (strain ATCC BAA-1088 / PV-4).